Here is a 249-residue protein sequence, read N- to C-terminus: Sec-independent protein translocase protein TatC (249 aa).

6 helical membrane-spanning segments follow: residues 18–38, 69–89, 96–116, 151–171, 187–207, and 208–228; these read VSVG…KNIF, AIVI…APGL, VILP…AFSY, LILG…LAKV, IVVI…SQIF, and MALP…MVNP.

Belongs to the TatC family. The Tat system comprises two distinct complexes: a TatABC complex, containing multiple copies of TatA, TatB and TatC subunits, and a separate TatA complex, containing only TatA subunits. Substrates initially bind to the TatABC complex, which probably triggers association of the separate TatA complex to form the active translocon.

Its subcellular location is the cell inner membrane. Its function is as follows. Part of the twin-arginine translocation (Tat) system that transports large folded proteins containing a characteristic twin-arginine motif in their signal peptide across membranes. Together with TatB, TatC is part of a receptor directly interacting with Tat signal peptides. In Helicobacter pylori (strain J99 / ATCC 700824) (Campylobacter pylori J99), this protein is Sec-independent protein translocase protein TatC.